The sequence spans 303 residues: UDP-N-acetylenolpyruvoylglucosamine reductase (303 aa).

Residues 27 to 207 (KVGGISQVFY…TSISQKLQKI (181 aa)) enclose the FAD-binding PCMH-type domain. Arg-175 is a catalytic residue. The Proton donor role is filled by Ser-224. Residue Glu-294 is part of the active site.

It belongs to the MurB family. It depends on FAD as a cofactor.

It localises to the cytoplasm. The catalysed reaction is UDP-N-acetyl-alpha-D-muramate + NADP(+) = UDP-N-acetyl-3-O-(1-carboxyvinyl)-alpha-D-glucosamine + NADPH + H(+). It participates in cell wall biogenesis; peptidoglycan biosynthesis. Functionally, cell wall formation. This chain is UDP-N-acetylenolpyruvoylglucosamine reductase, found in Orientia tsutsugamushi (strain Boryong) (Rickettsia tsutsugamushi).